Reading from the N-terminus, the 283-residue chain is Polyamine aminopropyltransferase (283 aa).

The region spanning 2 to 237 (ELWYTEEHTD…GHWLFGFASK (236 aa)) is the PABS domain. Gln31 is a binding site for S-methyl-5'-thioadenosine. Spermidine-binding residues include His62 and Asp86. Residues Glu106 and 137–138 (DG) contribute to the S-methyl-5'-thioadenosine site. Asp155 (proton acceptor) is an active-site residue. 155-158 (DSTD) provides a ligand contact to spermidine. S-methyl-5'-thioadenosine is bound at residue Pro162.

This sequence belongs to the spermidine/spermine synthase family. As to quaternary structure, homodimer or homotetramer.

Its subcellular location is the cytoplasm. The catalysed reaction is S-adenosyl 3-(methylsulfanyl)propylamine + putrescine = S-methyl-5'-thioadenosine + spermidine + H(+). Its pathway is amine and polyamine biosynthesis; spermidine biosynthesis; spermidine from putrescine: step 1/1. Its function is as follows. Catalyzes the irreversible transfer of a propylamine group from the amino donor S-adenosylmethioninamine (decarboxy-AdoMet) to putrescine (1,4-diaminobutane) to yield spermidine. In Clostridium perfringens (strain ATCC 13124 / DSM 756 / JCM 1290 / NCIMB 6125 / NCTC 8237 / Type A), this protein is Polyamine aminopropyltransferase.